The sequence spans 131 residues: Maturin (131 aa).

Tyr34 carries the phosphotyrosine modification. The segment covering 107-120 (FEEYSADVEEEEPE) has biased composition (acidic residues). The tract at residues 107 to 131 (FEEYSADVEEEEPEADHPQMGVSQQ) is disordered.

Belongs to the MTURN family. In terms of processing, phosphorylation at Tyr-34 is essential for its ability to promote megakaryocyte differentiation.

The protein resides in the cytoplasm. Functionally, promotes megakaryocyte differentiation by enhancing ERK and JNK signaling as well as up-regulating RUNX1 and FLI1 expression. Represses NF-kappa-B transcriptional activity by inhibiting phosphorylation of RELA at 'Ser- 536'. May be involved in early neuronal development. The polypeptide is Maturin (MTURN) (Bos taurus (Bovine)).